Here is a 162-residue protein sequence, read N- to C-terminus: Small ribosomal subunit protein uS7m (162 aa).

This sequence belongs to the universal ribosomal protein uS7 family. In terms of assembly, part of the small ribosomal subunit.

The protein localises to the mitochondrion. Its function is as follows. One of the primary rRNA binding proteins, it binds directly to 16S-like rRNA where it nucleates assembly of the head domain of the small subunit. This chain is Small ribosomal subunit protein uS7m (mrps7), found in Dictyostelium citrinum (Slime mold).